Consider the following 186-residue polypeptide: Putative thiamine-phosphate synthase 2 (186 aa).

Residues 35–39 and Asn-67 each bind 4-amino-2-methyl-5-(diphosphooxymethyl)pyrimidine; that span reads QLREK. Residue Glu-68 participates in Mg(2+) binding. Ser-105 serves as a coordination point for 4-amino-2-methyl-5-(diphosphooxymethyl)pyrimidine. Position 131–133 (131–133) interacts with 2-[(2R,5Z)-2-carboxy-4-methylthiazol-5(2H)-ylidene]ethyl phosphate; that stretch reads TSS. Position 134 (His-134) interacts with 4-amino-2-methyl-5-(diphosphooxymethyl)pyrimidine. 2-[(2R,5Z)-2-carboxy-4-methylthiazol-5(2H)-ylidene]ethyl phosphate contacts are provided by residues Gly-161 and 181–182; that span reads IS.

It belongs to the thiamine-phosphate synthase family. The cofactor is Mg(2+).

The catalysed reaction is 2-[(2R,5Z)-2-carboxy-4-methylthiazol-5(2H)-ylidene]ethyl phosphate + 4-amino-2-methyl-5-(diphosphooxymethyl)pyrimidine + 2 H(+) = thiamine phosphate + CO2 + diphosphate. It carries out the reaction 2-(2-carboxy-4-methylthiazol-5-yl)ethyl phosphate + 4-amino-2-methyl-5-(diphosphooxymethyl)pyrimidine + 2 H(+) = thiamine phosphate + CO2 + diphosphate. It catalyses the reaction 4-methyl-5-(2-phosphooxyethyl)-thiazole + 4-amino-2-methyl-5-(diphosphooxymethyl)pyrimidine + H(+) = thiamine phosphate + diphosphate. Its pathway is cofactor biosynthesis; thiamine diphosphate biosynthesis; thiamine phosphate from 4-amino-2-methyl-5-diphosphomethylpyrimidine and 4-methyl-5-(2-phosphoethyl)-thiazole: step 1/1. Its function is as follows. Condenses 4-methyl-5-(beta-hydroxyethyl)thiazole monophosphate (THZ-P) and 2-methyl-4-amino-5-hydroxymethyl pyrimidine pyrophosphate (HMP-PP) to form thiamine monophosphate (TMP). This is Putative thiamine-phosphate synthase 2 (thiE2) from Aquifex aeolicus (strain VF5).